Here is a 199-residue protein sequence, read N- to C-terminus: MAP6 domain-containing protein 1 (199 aa).

S-palmitoyl cysteine attachment occurs at residues cysteine 5, cysteine 10, and cysteine 11. The interval 33-110 is disordered; sequence YSDLDSEEPG…SAQSSAPPAP (78 aa). A Phosphoserine modification is found at serine 38. Mn regions lie at residues 130 to 143 and 165 to 177; these read TTSY…WTGV and DSSP…VPEV. Serine 167 bears the Phosphoserine mark.

Belongs to the STOP family. As to quaternary structure, interacts with calmodulin. Palmitoylated. Palmitoylation enhances association with microtubules.

Its subcellular location is the golgi apparatus. The protein resides in the cytoplasm. It is found in the cytoskeleton. May have microtubule-stabilizing activity. The chain is MAP6 domain-containing protein 1 (MAP6D1) from Homo sapiens (Human).